Reading from the N-terminus, the 192-residue chain is Putative molybdenum cofactor guanylyltransferase (192 aa).

Residues L8–G10, K21, D67, and D101 contribute to the GTP site. A Mg(2+)-binding site is contributed by D101.

The protein belongs to the MobA family. As to quaternary structure, monomer. Mg(2+) is required as a cofactor.

It localises to the cytoplasm. The catalysed reaction is Mo-molybdopterin + GTP + H(+) = Mo-molybdopterin guanine dinucleotide + diphosphate. Its function is as follows. Transfers a GMP moiety from GTP to Mo-molybdopterin (Mo-MPT) cofactor (Moco or molybdenum cofactor) to form Mo-molybdopterin guanine dinucleotide (Mo-MGD) cofactor. This chain is Putative molybdenum cofactor guanylyltransferase, found in Neisseria meningitidis serogroup B (strain ATCC BAA-335 / MC58).